A 187-amino-acid chain; its full sequence is Elongation factor P (187 aa).

This sequence belongs to the elongation factor P family.

It is found in the cytoplasm. It functions in the pathway protein biosynthesis; polypeptide chain elongation. Its function is as follows. Involved in peptide bond synthesis. Stimulates efficient translation and peptide-bond synthesis on native or reconstituted 70S ribosomes in vitro. Probably functions indirectly by altering the affinity of the ribosome for aminoacyl-tRNA, thus increasing their reactivity as acceptors for peptidyl transferase. The chain is Elongation factor P from Desulfatibacillum aliphaticivorans.